We begin with the raw amino-acid sequence, 110 residues long: U12-hexatoxin-Hi1a (110 aa).

An N-terminal signal peptide occupies residues 1-18; the sequence is MRVALVFLVLSILAATHG. Disulfide bonds link Cys72–Cys86, Cys79–Cys91, and Cys85–Cys104.

Expressed by the venom gland.

The protein localises to the secreted. Its function is as follows. Probable ion channel inhibitor. The sequence is that of U12-hexatoxin-Hi1a from Hadronyche infensa (Fraser island funnel-web spider).